The sequence spans 389 residues: Tryptophan 2,3-dioxygenase (389 aa).

Substrate-binding positions include 60 to 64 (FIITH) and arginine 131. Histidine 316 provides a ligand contact to heme. Threonine 331 is a binding site for substrate.

Belongs to the tryptophan 2,3-dioxygenase family. Homotetramer. Dimer of dimers. It depends on heme as a cofactor.

It catalyses the reaction L-tryptophan + O2 = N-formyl-L-kynurenine. The protein operates within amino-acid degradation; L-tryptophan degradation via kynurenine pathway; L-kynurenine from L-tryptophan: step 1/2. It functions in the pathway pigment biosynthesis; ommochrome biosynthesis. Functionally, heme-dependent dioxygenase that catalyzes the oxidative cleavage of the L-tryptophan (L-Trp) pyrrole ring and converts L-tryptophan to N-formyl-L-kynurenine. Catalyzes the oxidative cleavage of the indole moiety. This Mayetiola destructor (Hessian fly) protein is Tryptophan 2,3-dioxygenase.